A 496-amino-acid chain; its full sequence is O-acetyltransferase cpsE (496 aa).

Over residues 203-217 (IGTQGQLPDGVQSSD) the composition is skewed to polar residues. Positions 203–228 (IGTQGQLPDGVQSSDDPTDGAGDIFE) are disordered.

It belongs to the fumigaclavine B O-acetyltransferase family.

The enzyme catalyses campesine A + acetyl-CoA = campesine C + CoA. It participates in alkaloid biosynthesis. In terms of biological role, O-acetyltransferase; part of the gene cluster that mediates the biosynthesis of campesine G, a dimeric indole piperazine alkaloid that shows good insecticidal activity Galleria mellonella. Within the pathway, cpsE acetylates N13 of campesine A to produce campesine C. CpsE produces an inseparable mixture of two acyl-atropisomers due to the spontaneous rotation of an acyl group at N13 of piperazine ring. The non-canonical non-ribosomal peptide synthetase cpsA catalyzes the first steps of the pathway by producing L-tryptophanal and L-valinal from their respective amino-acids. These products condensate spontaneously to form trypyl-valyl pyrazine also known as didehydrocampesine A. The NmrA-like family domain-containing oxidoreductase cpsB is the next enzyme in cps pathway and reduces the unstable didehydrocampesine A to campesine A. The methyltransferase cpsF and the acetyltransferase cpsE both recognize N13 of piperazine ring to carry out methylation and acetylation of campesine A to produce campesine C and B, respectively. The cytochrome P450 monooxygenase cpsD then acts as a dimerase that catalyzes oxidative heterocoupling between campesine B and C to produce heterodimers with unexpected 6/5/6/6/6/6/5/6 eight-ring scaffold called campesine D. Finally,the cytochrome P450 monooxygenase cpsC is a regioselective dehydrogenase that catalyzes dehydrogenation reaction towards C2-N1 to produce campesine G. In Aspergillus campestris (strain IBT 28561), this protein is O-acetyltransferase cpsE.